The sequence spans 266 residues: UPF0328 protein ECU03_0130 (266 aa).

It belongs to the UPF0328 family.

The protein is UPF0328 protein ECU03_0130 of Encephalitozoon cuniculi (strain GB-M1) (Microsporidian parasite).